Consider the following 243-residue polypeptide: UPF0246 protein gbs2036 (243 aa).

The protein belongs to the UPF0246 family.

The sequence is that of UPF0246 protein gbs2036 from Streptococcus agalactiae serotype III (strain NEM316).